We begin with the raw amino-acid sequence, 245 residues long: 14-3-3 protein theta (245 aa).

The protein belongs to the 14-3-3 family. As to quaternary structure, homodimer, and heterodimer with other family members.

The protein resides in the cytoplasm. Adapter protein implicated in the regulation of a large spectrum of both general and specialized signaling pathways. Binds to a large number of partners, usually by recognition of a phosphoserine or phosphothreonine motif. Binding generally results in the modulation of the activity of the binding partner. The polypeptide is 14-3-3 protein theta (YWHAQ) (Gallus gallus (Chicken)).